A 212-amino-acid chain; its full sequence is Guanylate kinase (212 aa).

Residues 7–187 (GLLIVLSGPS…AADRIIAIIR (181 aa)) form the Guanylate kinase-like domain. 14 to 21 (GPSGVGKA) lines the ATP pocket.

This sequence belongs to the guanylate kinase family.

It localises to the cytoplasm. It carries out the reaction GMP + ATP = GDP + ADP. Essential for recycling GMP and indirectly, cGMP. This Onion yellows phytoplasma (strain OY-M) protein is Guanylate kinase.